Here is a 156-residue protein sequence, read N- to C-terminus: Tripartite terminase subunit 2 (156 aa).

Residues 1–37 form a disordered region; that stretch reads MYESENASEHHPELEDVFSENTGDSNPSMGSSDSTRS. Over residues 19 to 37 the composition is skewed to polar residues; the sequence is SENTGDSNPSMGSSDSTRS.

Belongs to the herpesviridae TRM2 protein family. As to quaternary structure, associates with TRM1 and TRM3 to form the tripartite terminase complex.

Its subcellular location is the host nucleus. Component of the molecular motor that translocates viral genomic DNA in empty capsid during DNA packaging. Forms a tripartite terminase complex together with TRM1 and TRM3 in the host cytoplasm. Once the complex reaches the host nucleus, it interacts with the capsid portal vertex. This portal forms a ring in which genomic DNA is translocated into the capsid. The sequence is that of Tripartite terminase subunit 2 from Varicella-zoster virus (strain Dumas) (HHV-3).